A 318-amino-acid chain; its full sequence is 4-hydroxy-3-methylbut-2-enyl diphosphate reductase (318 aa).

Cys21 lines the [4Fe-4S] cluster pocket. 2 residues coordinate (2E)-4-hydroxy-3-methylbut-2-enyl diphosphate: His50 and His83. Residues His50 and His83 each coordinate dimethylallyl diphosphate. The isopentenyl diphosphate site is built by His50 and His83. Cys105 lines the [4Fe-4S] cluster pocket. Position 133 (His133) interacts with (2E)-4-hydroxy-3-methylbut-2-enyl diphosphate. Residue His133 participates in dimethylallyl diphosphate binding. Position 133 (His133) interacts with isopentenyl diphosphate. Catalysis depends on Glu135, which acts as the Proton donor. Thr176 serves as a coordination point for (2E)-4-hydroxy-3-methylbut-2-enyl diphosphate. Position 206 (Cys206) interacts with [4Fe-4S] cluster. Residues Ser234, Ser235, Asn236, and Ser278 each contribute to the (2E)-4-hydroxy-3-methylbut-2-enyl diphosphate site. 4 residues coordinate dimethylallyl diphosphate: Ser234, Ser235, Asn236, and Ser278. Positions 234, 235, 236, and 278 each coordinate isopentenyl diphosphate.

The protein belongs to the IspH family. It depends on [4Fe-4S] cluster as a cofactor.

It carries out the reaction isopentenyl diphosphate + 2 oxidized [2Fe-2S]-[ferredoxin] + H2O = (2E)-4-hydroxy-3-methylbut-2-enyl diphosphate + 2 reduced [2Fe-2S]-[ferredoxin] + 2 H(+). The enzyme catalyses dimethylallyl diphosphate + 2 oxidized [2Fe-2S]-[ferredoxin] + H2O = (2E)-4-hydroxy-3-methylbut-2-enyl diphosphate + 2 reduced [2Fe-2S]-[ferredoxin] + 2 H(+). It functions in the pathway isoprenoid biosynthesis; dimethylallyl diphosphate biosynthesis; dimethylallyl diphosphate from (2E)-4-hydroxy-3-methylbutenyl diphosphate: step 1/1. The protein operates within isoprenoid biosynthesis; isopentenyl diphosphate biosynthesis via DXP pathway; isopentenyl diphosphate from 1-deoxy-D-xylulose 5-phosphate: step 6/6. In terms of biological role, catalyzes the conversion of 1-hydroxy-2-methyl-2-(E)-butenyl 4-diphosphate (HMBPP) into a mixture of isopentenyl diphosphate (IPP) and dimethylallyl diphosphate (DMAPP). Acts in the terminal step of the DOXP/MEP pathway for isoprenoid precursor biosynthesis. This Shewanella oneidensis (strain ATCC 700550 / JCM 31522 / CIP 106686 / LMG 19005 / NCIMB 14063 / MR-1) protein is 4-hydroxy-3-methylbut-2-enyl diphosphate reductase.